We begin with the raw amino-acid sequence, 412 residues long: Candidapepsin-2 (412 aa).

A signal peptide (or 18, or 21) is located at residues 1–25 (MTTIAIFTKNVLLAIAFALFAQGAA). A propeptide spans 26 to 61 (IPDPAKRDDNPGFVALDFEVTRKPLDVNATSELSKR) (activation peptide). Asn53 carries an N-linked (GlcNAc...) asparagine glycan. Residues 75 to 383 (YGIRVSVGSN…LDKETVLSRS (309 aa)) form the Peptidase A1 domain. Asp93 is a catalytic residue. Cys108 and Cys113 are joined by a disulfide. The active site involves Asp273. A disulfide bond links Cys311 and Cys345.

Belongs to the peptidase A1 family. In terms of processing, O-glycosylated.

It is found in the secreted. It catalyses the reaction Preferential cleavage at the carboxyl of hydrophobic amino acids, but fails to cleave 15-Leu-|-Tyr-16, 16-Tyr-|-Leu-17 and 24-Phe-|-Phe-25 of insulin B chain. Activates trypsinogen, and degrades keratin.. This is Candidapepsin-2 (SAPP2) from Candida parapsilosis (Yeast).